The chain runs to 792 residues: Xaa-Pro dipeptidyl-peptidase (792 aa).

Residues serine 363, aspartate 482, and histidine 513 each act as charge relay system in the active site.

This sequence belongs to the peptidase S15 family. As to quaternary structure, homodimer.

The protein resides in the cytoplasm. The catalysed reaction is Hydrolyzes Xaa-Pro-|- bonds to release unblocked, N-terminal dipeptides from substrates including Ala-Pro-|-p-nitroanilide and (sequentially) Tyr-Pro-|-Phe-Pro-|-Gly-Pro-|-Ile.. Removes N-terminal dipeptides sequentially from polypeptides having unsubstituted N-termini provided that the penultimate residue is proline. The chain is Xaa-Pro dipeptidyl-peptidase (pepX) from Lactobacillus delbrueckii subsp. lactis.